A 195-amino-acid polypeptide reads, in one-letter code: MPKLGMREIRRAQLIDATLRSIDEAGLPGTTLASVAQRANISTGIVSHYFGDKDGLLEATMRHVLRDLWAATTRRRAAASDAPRARLRAVVAANFDDTQISAPVMKTWLAFWSQSMHEPTLRRLQRVNTRRLHSNLCAEFAKTLPRARAREAASGLAALIDGLWLRGALAGEPLDTKAALKLANDYIDQLLAPRV.

The region spanning 8–68 (EIRRAQLIDA…ATMRHVLRDL (61 aa)) is the HTH tetR-type domain. Positions 31 to 50 (TLASVAQRANISTGIVSHYF) form a DNA-binding region, H-T-H motif.

The protein operates within amine and polyamine biosynthesis; betaine biosynthesis via choline pathway [regulation]. Repressor involved in the biosynthesis of the osmoprotectant glycine betaine. It represses transcription of the choline transporter BetT and the genes of BetAB involved in the synthesis of glycine betaine. The protein is HTH-type transcriptional regulator BetI of Burkholderia mallei (strain NCTC 10247).